The sequence spans 66 residues: Large ribosomal subunit protein bL35 (66 aa).

Basic residues predominate over residues 1 to 16 (MPKMKTHRGAAKRVKR). The tract at residues 1 to 28 (MPKMKTHRGAAKRVKRTGSGQLKRSRAF) is disordered.

This sequence belongs to the bacterial ribosomal protein bL35 family.

In Staphylococcus epidermidis (strain ATCC 35984 / DSM 28319 / BCRC 17069 / CCUG 31568 / BM 3577 / RP62A), this protein is Large ribosomal subunit protein bL35.